Consider the following 632-residue polypeptide: tRNA-guanine(15) transglycosylase (632 aa).

Asp86 (nucleophile) is an active-site residue. 2 residues coordinate substrate: Asp121 and Gly186. A PUA domain is found at 553 to 628 (NLRVFVKNES…IAVKIHEGRD (76 aa)).

It belongs to the archaeosine tRNA-ribosyltransferase family. Zn(2+) is required as a cofactor.

It carries out the reaction guanosine(15) in tRNA + 7-cyano-7-deazaguanine = 7-cyano-7-carbaguanosine(15) in tRNA + guanine. It participates in tRNA modification; archaeosine-tRNA biosynthesis. Functionally, exchanges the guanine residue with 7-cyano-7-deazaguanine (preQ0) at position 15 in the dihydrouridine loop (D-loop) of archaeal tRNAs. This Thermoplasma volcanium (strain ATCC 51530 / DSM 4299 / JCM 9571 / NBRC 15438 / GSS1) protein is tRNA-guanine(15) transglycosylase.